The chain runs to 104 residues: Small ribosomal subunit protein bS6c (104 aa).

Belongs to the bacterial ribosomal protein bS6 family.

It localises to the plastid. Its subcellular location is the cyanelle. Binds together with bS18 to 16S ribosomal RNA. The protein is Small ribosomal subunit protein bS6c (rps6) of Cyanophora paradoxa.